The sequence spans 435 residues: Shikimate O-hydroxycinnamoyltransferase (435 aa).

Catalysis depends on proton acceptor residues His153 and Asp382.

This sequence belongs to the plant acyltransferase family. Highly expressed in stem vascular tissues.

It catalyses the reaction shikimate + 4-coumaroyl-CoA = trans-4-coumaroylshikimate + CoA. Its function is as follows. Acyltransferase involved in the biosynthesis of lignin. The affinity for shikimate as acceptor is 100-fold higher than for quinate. The most efficient donors are caffeoyl-CoA &gt; p-coumaroyl-CoA &gt; feruloyl-CoA &gt;&gt; sinapoyl-CoA. This Nicotiana tabacum (Common tobacco) protein is Shikimate O-hydroxycinnamoyltransferase (HST).